We begin with the raw amino-acid sequence, 330 residues long: Ketol-acid reductoisomerase (NADP(+)) (330 aa).

One can recognise a KARI N-terminal Rossmann domain in the interval 3–184 (LPVYYDKDID…GGGRMGVLET (182 aa)). NADP(+)-binding positions include 26–29 (YGAQ), serine 52, and serine 54. Histidine 109 is a catalytic residue. Glycine 135 is an NADP(+) binding site. The region spanning 185–329 (SFKEECESDL…EILRAPFNHK (145 aa)) is the KARI C-terminal knotted domain. Residues aspartate 193, glutamate 197, glutamate 229, and glutamate 233 each contribute to the Mg(2+) site. Serine 254 provides a ligand contact to substrate.

The protein belongs to the ketol-acid reductoisomerase family. It depends on Mg(2+) as a cofactor.

The catalysed reaction is (2R)-2,3-dihydroxy-3-methylbutanoate + NADP(+) = (2S)-2-acetolactate + NADPH + H(+). It catalyses the reaction (2R,3R)-2,3-dihydroxy-3-methylpentanoate + NADP(+) = (S)-2-ethyl-2-hydroxy-3-oxobutanoate + NADPH + H(+). The protein operates within amino-acid biosynthesis; L-isoleucine biosynthesis; L-isoleucine from 2-oxobutanoate: step 2/4. It participates in amino-acid biosynthesis; L-valine biosynthesis; L-valine from pyruvate: step 2/4. Involved in the biosynthesis of branched-chain amino acids (BCAA). Catalyzes an alkyl-migration followed by a ketol-acid reduction of (S)-2-acetolactate (S2AL) to yield (R)-2,3-dihydroxy-isovalerate. In the isomerase reaction, S2AL is rearranged via a Mg-dependent methyl migration to produce 3-hydroxy-3-methyl-2-ketobutyrate (HMKB). In the reductase reaction, this 2-ketoacid undergoes a metal-dependent reduction by NADPH to yield (R)-2,3-dihydroxy-isovalerate. This Helicobacter pylori (strain Shi470) protein is Ketol-acid reductoisomerase (NADP(+)).